Consider the following 360-residue polypeptide: Melanoma-associated antigen B16 (360 aa).

Residues 1 to 118 (MSQKNPEYAA…GNSVIPPDQP (118 aa)) are disordered. Positions 9–19 (AADHDHTREEM) are enriched in basic and acidic residues. The segment covering 63-98 (CSSSQLLTASNQEDPAYETPSTSRGLQHPYVSSSES) has biased composition (polar residues). The region spanning 125-324 (IDGKVNFLVN…TVFPSQYEEA (200 aa)) is the MAGE domain. The interval 340-360 (AGPSSASGESSSDMGSNVPHI) is disordered. Residues 341–360 (GPSSASGESSSDMGSNVPHI) are compositionally biased toward low complexity.

This chain is Melanoma-associated antigen B16 (Mageb16), found in Rattus norvegicus (Rat).